The sequence spans 56 residues: Large ribosomal subunit protein bL33 (56 aa).

This sequence belongs to the bacterial ribosomal protein bL33 family.

This chain is Large ribosomal subunit protein bL33, found in Helicobacter hepaticus (strain ATCC 51449 / 3B1).